We begin with the raw amino-acid sequence, 337 residues long: Tetraacyldisaccharide 4'-kinase (337 aa).

ATP is bound at residue 58-65; it reads TVGGSGKT.

Belongs to the LpxK family.

The enzyme catalyses a lipid A disaccharide + ATP = a lipid IVA + ADP + H(+). Its pathway is glycolipid biosynthesis; lipid IV(A) biosynthesis; lipid IV(A) from (3R)-3-hydroxytetradecanoyl-[acyl-carrier-protein] and UDP-N-acetyl-alpha-D-glucosamine: step 6/6. Transfers the gamma-phosphate of ATP to the 4'-position of a tetraacyldisaccharide 1-phosphate intermediate (termed DS-1-P) to form tetraacyldisaccharide 1,4'-bis-phosphate (lipid IVA). The protein is Tetraacyldisaccharide 4'-kinase of Shewanella putrefaciens (strain CN-32 / ATCC BAA-453).